A 785-amino-acid polypeptide reads, in one-letter code: Endonuclease MutS2 (785 aa).

ATP is bound at residue 332-339 (GPNTGGKT). The Smr domain occupies 710–785 (VDLRGMDSEE…GNGVTVVELK (76 aa)).

This sequence belongs to the DNA mismatch repair MutS family. MutS2 subfamily. In terms of assembly, homodimer. Binds to stalled ribosomes, contacting rRNA.

In terms of biological role, endonuclease that is involved in the suppression of homologous recombination and thus may have a key role in the control of bacterial genetic diversity. Its function is as follows. Acts as a ribosome collision sensor, splitting the ribosome into its 2 subunits. Detects stalled/collided 70S ribosomes which it binds and splits by an ATP-hydrolysis driven conformational change. Acts upstream of the ribosome quality control system (RQC), a ribosome-associated complex that mediates the extraction of incompletely synthesized nascent chains from stalled ribosomes and their subsequent degradation. Probably generates substrates for RQC. The polypeptide is Endonuclease MutS2 (Clostridium novyi (strain NT)).